The primary structure comprises 258 residues: MKYLSAILEEKRREVEALKRQNPSARYRDVASSLPSCRGFARALQGEGGSIRLIAEVKKASPSRGVIVEDFDPVRIALAYEALGASALSVLTDRHFFQGSAGYLQQVAAAVSLPVLRKDFIIDELQIFESRIMGADAILLIVAALEPSELHDYLQMAGEIGLDVLVEVHDRHELALAIESGAEVVGVNNRNLKDFSVDPATSASLRPYFPSGVIAVSESGLKTADDIALVRDAGFDAVLIGEGLQVSSELRSLSWPNA.

It belongs to the TrpC family.

It catalyses the reaction 1-(2-carboxyphenylamino)-1-deoxy-D-ribulose 5-phosphate + H(+) = (1S,2R)-1-C-(indol-3-yl)glycerol 3-phosphate + CO2 + H2O. The protein operates within amino-acid biosynthesis; L-tryptophan biosynthesis; L-tryptophan from chorismate: step 4/5. This Chlorobium phaeovibrioides (strain DSM 265 / 1930) (Prosthecochloris vibrioformis (strain DSM 265)) protein is Indole-3-glycerol phosphate synthase.